We begin with the raw amino-acid sequence, 133 residues long: Single-stranded DNA-binding protein 2 (133 aa).

The 103-residue stretch at 1 to 103 (MNKTILIGRL…VVAEEVKFLE (103 aa)) folds into the SSB domain.

In terms of assembly, homotetramer.

The polypeptide is Single-stranded DNA-binding protein 2 (ssb2) (Clostridium acetobutylicum (strain ATCC 824 / DSM 792 / JCM 1419 / IAM 19013 / LMG 5710 / NBRC 13948 / NRRL B-527 / VKM B-1787 / 2291 / W)).